The primary structure comprises 251 residues: uncharacterized protein (251 aa).

Residue 14 to 37 coordinates NADP(+); that stretch reads VLGGTSAIGLATARRLIARGARLV. S145 is a substrate binding site. The Proton acceptor role is filled by Y158.

This sequence belongs to the short-chain dehydrogenases/reductases (SDR) family.

Functionally, may be involved in the biosynthesis of a heptaene-type antibiotic. This is an uncharacterized protein from Streptomyces coelicolor.